Here is a 450-residue protein sequence, read N- to C-terminus: tRNA-2-methylthio-N(6)-dimethylallyladenosine synthase (450 aa).

The MTTase N-terminal domain maps to 14-132 (GEFFIETWGC…FPNYLNEVKK (119 aa)). Residues Cys-23, Cys-59, Cys-93, Cys-169, Cys-173, and Cys-176 each contribute to the [4Fe-4S] cluster site. One can recognise a Radical SAM core domain in the interval 155–385 (RKNSMKAFVT…VEVLNEISAK (231 aa)). The region spanning 388 to 450 (KAYEGKIEEV…NSFSLTGEEI (63 aa)) is the TRAM domain.

The protein belongs to the methylthiotransferase family. MiaB subfamily. As to quaternary structure, monomer. [4Fe-4S] cluster serves as cofactor.

It localises to the cytoplasm. It carries out the reaction N(6)-dimethylallyladenosine(37) in tRNA + (sulfur carrier)-SH + AH2 + 2 S-adenosyl-L-methionine = 2-methylsulfanyl-N(6)-dimethylallyladenosine(37) in tRNA + (sulfur carrier)-H + 5'-deoxyadenosine + L-methionine + A + S-adenosyl-L-homocysteine + 2 H(+). Catalyzes the methylthiolation of N6-(dimethylallyl)adenosine (i(6)A), leading to the formation of 2-methylthio-N6-(dimethylallyl)adenosine (ms(2)i(6)A) at position 37 in tRNAs that read codons beginning with uridine. The sequence is that of tRNA-2-methylthio-N(6)-dimethylallyladenosine synthase from Clostridium botulinum (strain ATCC 19397 / Type A).